A 534-amino-acid polypeptide reads, in one-letter code: Zinc finger protein 671 (534 aa).

A KRAB domain is found at 49-120; that stretch reads VVFEDVFVYF…DQVDMTSATE (72 aa). The C2H2-type 1; degenerate zinc-finger motif lies at 192–214; the sequence is YLCGACGKQFWFSTDFDQHQNQP. 9 C2H2-type zinc fingers span residues 285-307, 313-335, 341-363, 369-391, 397-419, 425-447, 451-473, 479-501, and 507-529; these read HRCGECGKAFTRKDTLARHQRIH, YECNECGKFFSQSYDLFKHQTVH, YECSECGKFFRQISGLIEHRRVH, YQCGKCGKFFSSKSNLIRHQEVH, YVCSECGKEFSRKHTLVLHQRTH, YECSECGKAFSQSSHLNVHWRIH, YECSRCGKAFSCISKLIQHQKVH, YECSKCGKAFTQRPNLIRHWKVH, and YVCSECGREFIRKQTLVLHQRVH.

This sequence belongs to the krueppel C2H2-type zinc-finger protein family.

It is found in the nucleus. May be involved in transcriptional regulation. The protein is Zinc finger protein 671 (ZNF671) of Homo sapiens (Human).